The chain runs to 306 residues: Putative lipid kinase Sca_1050 (306 aa).

The DAGKc domain maps to 3 to 139; that stretch reads QHFHRGILFY…FDVLKVNDTY (137 aa). ATP-binding positions include serine 44, 74 to 80, and threonine 101; that span reads GDGTVNE. Serine 220, aspartate 223, and glutamate 225 together coordinate Mg(2+). The Proton acceptor role is filled by glutamate 281.

It belongs to the diacylglycerol/lipid kinase family. It depends on Mg(2+) as a cofactor.

Its function is as follows. May catalyze the ATP-dependent phosphorylation of lipids other than diacylglycerol (DAG). This Staphylococcus carnosus (strain TM300) protein is Putative lipid kinase Sca_1050.